The following is a 368-amino-acid chain: Microtubule-associated protein Jupiter (368 aa).

The residue at position 30 (Ser30) is a Phosphoserine. The residue at position 41 (Thr41) is a Phosphothreonine. The span at 81 to 93 (RRGQKSVDSHSRL) shows a compositional bias: basic and acidic residues. A disordered region spans residues 81–106 (RRGQKSVDSHSRLFGEPSRPITPGKN). Position 102 is a phosphothreonine (Thr102). Residues Ser111, Ser146, and Ser157 each carry the phosphoserine modification. Composition is skewed to low complexity over residues 129 to 157 (NGNT…VSSS) and 238 to 248 (GRYGYSSQSRR). Disordered regions lie at residues 129 to 164 (NGNT…LKIN), 196 to 256 (SQGN…SPLN), and 316 to 368 (KPKK…SGLW). Positions 337 to 354 (GSDSAQTPTMNGANQVIN) are enriched in polar residues.

The protein belongs to the MAP Jupiter family.

The protein localises to the nucleus. It is found in the cytoplasm. Its subcellular location is the cytoskeleton. It localises to the spindle. Binds to all microtubule populations. This is Microtubule-associated protein Jupiter from Drosophila willistoni (Fruit fly).